The following is a 237-amino-acid chain: Small ribosomal subunit protein eS4 (237 aa).

In terms of domain architecture, S4 RNA-binding spans 37-99 (VPLLIVLRDV…REEYYRIFPD (63 aa)).

Belongs to the eukaryotic ribosomal protein eS4 family.

This chain is Small ribosomal subunit protein eS4, found in Natronomonas pharaonis (strain ATCC 35678 / DSM 2160 / CIP 103997 / JCM 8858 / NBRC 14720 / NCIMB 2260 / Gabara) (Halobacterium pharaonis).